The chain runs to 553 residues: Mucolipin-3 (553 aa).

Over 1–62 the chain is Cytoplasmic; that stretch reads MANPEIVISS…FWARGRKPWK (62 aa). An interaction with phosphoinositides region spans residues 52–62; the sequence is KFWARGRKPWK. The helical transmembrane segment at 63 to 83 threads the bilayer; the sequence is LAIQILKIAMVTIQLVLFGLS. Residues 84 to 283 lie on the Extracellular side of the membrane; the sequence is NQMVVAFKEE…VSGSIQKNTH (200 aa). Positions 104-118 are extracellular/lumenal pore loop; sequence KGYIDRMDDTYAVYT. Asn138 carries an N-linked (GlcNAc...) asparagine glycan. Cys159 and Cys185 are disulfide-bonded. An N-linked (GlcNAc...) asparagine glycan is attached at Asn205. Cys238 and Cys269 form a disulfide bridge. Residues 284–304 traverse the membrane as a helical segment; it reads NMMIFDAFVILTCLVSLILCI. The Cytoplasmic portion of the chain corresponds to 305–341; it reads RSVISGLQLQQEFVNFFLLHYKKDVSVSDQMEFVNGW. The chain crosses the membrane as a helical span at residues 342-362; it reads YIMIIISDILTIIGSILKMEI. At 363–371 the chain is on the extracellular side; sequence QAKSLTSYD. Residues 372 to 392 traverse the membrane as a helical segment; that stretch reads VCSILLGTSTMLVWLGVIRYL. Residues 393 to 414 lie on the Cytoplasmic side of the membrane; that stretch reads GFFAKYNLLILTLQAALPNVIR. Residues 415–435 traverse the membrane as a helical segment; sequence FCCCAAMIYLGYCFCGWIVLG. At 436–443 the chain is on the extracellular side; it reads PYHNKFRS. An intramembrane region (pore-forming) is located at residues 444–464; sequence LNMVSECLFSLINGDDMFATF. Residues 456–459 carry the Selectivity filter motif; the sequence is NGDD. Residues 465–475 are Extracellular-facing; that stretch reads AKMQQKSYLVW. Residues 476–497 form a helical membrane-spanning segment; it reads LFSRIYLYSFISLFIYMILSLF. Topologically, residues 498–553 are cytoplasmic; that stretch reads IALITDTYETIKHYQQDGFPETELRTFISECKDLPNSGKFRLEDDPPVSLFCCCKK.

The protein belongs to the transient receptor (TC 1.A.4) family. Polycystin subfamily. MCOLN3 sub-subfamily. Homotetramer. Can heterooligomerize with MCOLN1; heteromeric assemblies have different channel properties as compared to the respective homooligomers and may be tissue-specific. May heterooligomerize with TRPV5 to form a functional distinct ion channel. Interacts with GABARAPL2. In terms of processing, N-glycosylated.

The protein resides in the lysosome membrane. It is found in the early endosome membrane. Its subcellular location is the late endosome membrane. It localises to the cytoplasmic vesicle. The protein localises to the autophagosome membrane. The protein resides in the cell projection. It is found in the stereocilium membrane. The catalysed reaction is Ca(2+)(in) = Ca(2+)(out). It catalyses the reaction Mg(2+)(in) = Mg(2+)(out). It carries out the reaction K(+)(in) = K(+)(out). The enzyme catalyses Na(+)(in) = Na(+)(out). With respect to regulation, channel activity is activated by PtdIns(3,5)P2 (phosphatidylinositol 3,5-bisphosphate). Inhibited by lumenal H(+) and Na(+). The channel pore shows dynamic behavior and undergoes spontaneous, Ca(2+)-dependent modulation when conducting Ca(2+). Its function is as follows. Nonselective cation channel probably playing a role in the regulation of membrane trafficking events. Acts as a Ca(2+)-permeable cation channel with inwardly rectifying activity. Mediates release of Ca(2+) from endosomes to the cytoplasm, contributes to endosomal acidification and is involved in the regulation of membrane trafficking and fusion in the endosomal pathway. Also permeable to Mg(2+), Na(+) and K(+). Does not seem to act as mechanosensory transduction channel in inner ear sensory hair cells. Proposed to play a critical role at the cochlear stereocilia ankle-link region during hair-bundle growth. Involved in the regulation of autophagy. Through association with GABARAPL2 may be involved in autophagosome formation possibly providing Ca(2+) for the fusion process. Through a possible and probably tissue-specific heteromerization with MCOLN1 may be at least in part involved in many lysosome-dependent cellular events. Possible heteromeric ion channel assemblies with TRPV5 show pharmacological similarity with TRPML3. The polypeptide is Mucolipin-3 (Callithrix jacchus (White-tufted-ear marmoset)).